Consider the following 67-residue polypeptide: Large ribosomal subunit protein bL35 (67 aa).

Belongs to the bacterial ribosomal protein bL35 family.

This chain is Large ribosomal subunit protein bL35, found in Leptospira borgpetersenii serovar Hardjo-bovis (strain JB197).